The sequence spans 265 residues: Glutamate racemase (265 aa).

Substrate contacts are provided by residues 9-10 and 41-42; these read DS and YG. Cys-72 serves as the catalytic Proton donor/acceptor. Residue 73-74 coordinates substrate; the sequence is NT. Cys-183 serves as the catalytic Proton donor/acceptor. 184–185 contributes to the substrate binding site; it reads TH.

It belongs to the aspartate/glutamate racemases family.

It catalyses the reaction L-glutamate = D-glutamate. It participates in cell wall biogenesis; peptidoglycan biosynthesis. In terms of biological role, provides the (R)-glutamate required for cell wall biosynthesis. The protein is Glutamate racemase of Lysinibacillus sphaericus (strain C3-41).